The primary structure comprises 436 residues: Methylenetetrahydrofolate--tRNA-(uracil-5-)-methyltransferase TrmFO (436 aa).

Position 10-15 (Gly-10–Gly-15) interacts with FAD.

The protein belongs to the MnmG family. TrmFO subfamily. FAD is required as a cofactor.

The protein localises to the cytoplasm. The enzyme catalyses uridine(54) in tRNA + (6R)-5,10-methylene-5,6,7,8-tetrahydrofolate + NADH + H(+) = 5-methyluridine(54) in tRNA + (6S)-5,6,7,8-tetrahydrofolate + NAD(+). The catalysed reaction is uridine(54) in tRNA + (6R)-5,10-methylene-5,6,7,8-tetrahydrofolate + NADPH + H(+) = 5-methyluridine(54) in tRNA + (6S)-5,6,7,8-tetrahydrofolate + NADP(+). Its function is as follows. Catalyzes the folate-dependent formation of 5-methyl-uridine at position 54 (M-5-U54) in all tRNAs. The protein is Methylenetetrahydrofolate--tRNA-(uracil-5-)-methyltransferase TrmFO of Exiguobacterium sp. (strain ATCC BAA-1283 / AT1b).